A 60-amino-acid polypeptide reads, in one-letter code: Large ribosomal subunit protein bL32 (60 aa).

The segment covering 1–16 (MAVPKRKTSPSKRGMR) has biased composition (basic residues). A disordered region spans residues 1 to 60 (MAVPKRKTSPSKRGMRRSADALKAPTYVEDKNSGEMRRPHHIDLKTGMYRGRQVLTPKES). Residues 28 to 44 (VEDKNSGEMRRPHHIDL) are compositionally biased toward basic and acidic residues.

It belongs to the bacterial ribosomal protein bL32 family.

This chain is Large ribosomal subunit protein bL32, found in Mesorhizobium japonicum (strain LMG 29417 / CECT 9101 / MAFF 303099) (Mesorhizobium loti (strain MAFF 303099)).